We begin with the raw amino-acid sequence, 70 residues long: Small ribosomal subunit protein bS21B (70 aa).

Belongs to the bacterial ribosomal protein bS21 family.

The sequence is that of Small ribosomal subunit protein bS21B from Paraburkholderia xenovorans (strain LB400).